The following is a 342-amino-acid chain: AA9 family lytic polysaccharide monooxygenase H (342 aa).

A signal peptide spans 1-19 (MSKASALLAGLTGAALVAA). Cu(2+) contacts are provided by H20 and H106. Disulfide bonds link C75/C195 and C117/C121. 2 residues coordinate O2: H181 and Q190. Residue Y192 participates in Cu(2+) binding. The disordered stretch occupies residues 263–308 (ATVPGGGGANPTATTTAATSAAPSTTLRTTTTSAAQTTAPPSGDVQ). The span at 272-305 (NPTATTTAATSAAPSTTLRTTTTSAAQTTAPPSG) shows a compositional bias: low complexity. Residues 306–342 (DVQTKYGQCGGNGWTGPTVCAPGSSCSVLNEWYSQCL) enclose the CBM1 domain.

This sequence belongs to the polysaccharide monooxygenase AA9 family. Requires Cu(2+) as cofactor.

The protein resides in the secreted. The catalysed reaction is [(1-&gt;4)-beta-D-glucosyl]n+m + reduced acceptor + O2 = 4-dehydro-beta-D-glucosyl-[(1-&gt;4)-beta-D-glucosyl]n-1 + [(1-&gt;4)-beta-D-glucosyl]m + acceptor + H2O.. Its activity is regulated as follows. The presence of lignin presents a significant source of antioxidants, which probably increase the activity by trapping liberated oxidized fragments. Functionally, lytic polysaccharide monooxygenase (LPMO) that depolymerizes crystalline and amorphous polysaccharides via the oxidation of scissile alpha- or beta-(1-4)-glycosidic bonds, yielding C1 or C4 oxidation products. Catalysis by LPMOs requires the reduction of the active-site copper from Cu(II) to Cu(I) by a reducing agent and H(2)O(2) or O(2) as a cosubstrate. Hydrolyzes weakly barley beta-glucan, carboxymethyl cellulose, lichenan, wheat arabinoxylan and birchwood xylan. Stimulates the hydrolysis of lignocellulosic substrates (such as hydrothermal pretreated wheat straw or steam-pretreated spruce), when combined with other cellulolytic enzymes. The chain is AA9 family lytic polysaccharide monooxygenase H from Thermothelomyces thermophilus (strain ATCC 42464 / BCRC 31852 / DSM 1799) (Sporotrichum thermophile).